We begin with the raw amino-acid sequence, 483 residues long: UDP-N-acetylmuramoyl-L-alanyl-D-glutamate--2,6-diaminopimelate ligase 2 (483 aa).

Ser-30 lines the UDP-N-acetyl-alpha-D-muramoyl-L-alanyl-D-glutamate pocket. 111-117 (GTNGKTT) is a binding site for ATP. UDP-N-acetyl-alpha-D-muramoyl-L-alanyl-D-glutamate is bound by residues 156 to 157 (TT), Thr-183, and Arg-191. Lys-223 is modified (N6-carboxylysine). Meso-2,6-diaminopimelate-binding positions include Arg-380, 404–407 (DNPR), Gly-456, and Glu-460. The short motif at 404-407 (DNPR) is the Meso-diaminopimelate recognition motif element.

This sequence belongs to the MurCDEF family. MurE subfamily. The cofactor is Mg(2+). In terms of processing, carboxylation is probably crucial for Mg(2+) binding and, consequently, for the gamma-phosphate positioning of ATP.

Its subcellular location is the cytoplasm. The enzyme catalyses UDP-N-acetyl-alpha-D-muramoyl-L-alanyl-D-glutamate + meso-2,6-diaminopimelate + ATP = UDP-N-acetyl-alpha-D-muramoyl-L-alanyl-gamma-D-glutamyl-meso-2,6-diaminopimelate + ADP + phosphate + H(+). The protein operates within cell wall biogenesis; peptidoglycan biosynthesis. Its function is as follows. Catalyzes the addition of meso-diaminopimelic acid to the nucleotide precursor UDP-N-acetylmuramoyl-L-alanyl-D-glutamate (UMAG) in the biosynthesis of bacterial cell-wall peptidoglycan. This chain is UDP-N-acetylmuramoyl-L-alanyl-D-glutamate--2,6-diaminopimelate ligase 2, found in Clostridium acetobutylicum (strain ATCC 824 / DSM 792 / JCM 1419 / IAM 19013 / LMG 5710 / NBRC 13948 / NRRL B-527 / VKM B-1787 / 2291 / W).